The primary structure comprises 195 residues: Capsid protein (195 aa).

Positions 148–195 are disordered; it reads NAPILSTLPETTVVRRRGRSPRRRTPSPRRRRSQSPRRRRSASPASQC. Residues 161 to 188 are compositionally biased toward basic residues; it reads VRRRGRSPRRRTPSPRRRRSQSPRRRRS. Phosphoserine; by host occurs at positions 167, 174, and 182. The stretch at 167 to 172 is one 1; half-length repeat; the sequence is SPRRRT. Positions 167–188 are 3 X 7 AA repeats of S-P-R-R-R-[PR]-S; it reads SPRRRTPSPRRRRSQSPRRRRS. The Bipartite nuclear localization signal motif lies at 170-187; sequence RRTPSPRRRRSQSPRRRR. 2 tandem repeats follow at residues 174–180 and 182–188. Residues 189-195 are RNA binding; sequence ASPASQC.

It belongs to the orthohepadnavirus core antigen family. In terms of assembly, homodimerizes, then multimerizes. Interacts with cytosol exposed regions of viral L glycoprotein present in the reticulum-to-Golgi compartment. Interacts with human FLNB. Phosphorylated form interacts with host importin alpha; this interaction depends on the exposure of the NLS, which itself depends upon genome maturation and/or phosphorylation of the capsid protein. Interacts with host NUP153. Phosphorylated by host SRPK1, SRPK2, and maybe protein kinase C or GAPDH. Phosphorylation is critical for pregenomic RNA packaging. Protein kinase C phosphorylation is stimulated by HBx protein and may play a role in transport of the viral genome to the nucleus at the late step during the viral replication cycle.

It is found in the virion. It localises to the host cytoplasm. Functionally, self assembles to form an icosahedral capsid. Most capsids appear to be large particles with an icosahedral symmetry of T=4 and consist of 240 copies of capsid protein, though a fraction forms smaller T=3 particles consisting of 180 capsid proteins. Entering capsids are transported along microtubules to the nucleus. Phosphorylation of the capsid is thought to induce exposure of nuclear localization signal in the C-terminal portion of the capsid protein that allows binding to the nuclear pore complex via the importin (karyopherin-) alpha and beta. Capsids are imported in intact form through the nuclear pore into the nuclear basket, where it probably binds NUP153. Only capsids that contain the mature viral genome can release the viral DNA and capsid protein into the nucleoplasm. Immature capsids get stuck in the basket. Capsids encapsulate the pre-genomic RNA and the P protein. Pre-genomic RNA is reverse-transcribed into DNA while the capsid is still in the cytoplasm. The capsid can then either be directed to the nucleus, providing more genomes for transcription, or bud through the endoplasmic reticulum to provide new virions. This chain is Capsid protein, found in Hepatitis B virus genotype G (isolate United States/USG17/2002) (HBV-G).